Reading from the N-terminus, the 785-residue chain is E3 UFM1-protein ligase 1 homolog (785 aa).

Positions 396–416 are enriched in basic and acidic residues; the sequence is MKHQDVIPDKESAENKADKRD. The tract at residues 396–473 is disordered; sequence MKHQDVIPDK…KSAGGKKGAK (78 aa). Residues 439–449 are compositionally biased toward basic residues; the sequence is KSTKKHARGHR.

It belongs to the UFL1 family.

Functionally, E3 UFM1-protein ligase that mediates ufmylation of target proteins. This Culex quinquefasciatus (Southern house mosquito) protein is E3 UFM1-protein ligase 1 homolog.